We begin with the raw amino-acid sequence, 790 residues long: F-box and leucine-rich repeat protein 13 (790 aa).

Residues 237–283 (AFDISVLPEQAILQIFLYLTFKDMMACSRVNRSWMAMIQRGSLWNSI) form the F-box domain. LRR repeat units lie at residues 503–525 (QLTVLNLTNCIRIGDIGLKHFFD), 531–552 (RLRELNLTNCSLLGDSSVIRLS), 557–579 (NLHYLNLRNCEHLTDLAIEYIAS), 582–602 (SLISVDLSGTLISNEGMTILS), 606–628 (KLREVSVSDCVNITDFGIRAYCK), and 632–657 (LLEHLDVSYCSQLTDDIIKTIAIFCT).

This sequence belongs to the DRC6 family. Component of the nexin-dynein regulatory complex (N-DRC). Directly interacts with SKP1 and CUL1. Interacts with TCTE1/DRC5.

The protein resides in the cytoplasm. The protein localises to the cytoskeleton. It localises to the flagellum axoneme. It is found in the microtubule organizing center. Its subcellular location is the centrosome. Its function is as follows. Substrate-recognition component of the SCF (SKP1-CUL1-F-box protein)-type E3 ubiquitin ligase complex. Component of the nexin-dynein regulatory complex (N-DRC), a key regulator of ciliary/flagellar motility which maintains the alignment and integrity of the distal axoneme and regulates microtubule sliding in motile axonemes. Specifically targets CEP192 isoform 3 for ubiquitin-mediated proteolysis and thereby acts as a regulator of microtubule nucleation activity. The chain is F-box and leucine-rich repeat protein 13 (Fbxl13) from Mus musculus (Mouse).